A 217-amino-acid chain; its full sequence is Adenylate kinase (217 aa).

ATP is bound at residue 10–15 (GAGKGT). The tract at residues 30–59 (STGDMLRAAVKAGTPLGLQAKDIMASGGLV) is NMP. AMP contacts are provided by residues threonine 31, arginine 36, 57-59 (GLV), 85-88 (GFPR), and glutamine 92. The LID stretch occupies residues 122–159 (GRRVHEASGRVYHIIHNAPRVEGHDDVTGEPLVQRPDD). ATP contacts are provided by residues arginine 123 and 132–133 (VY). 2 residues coordinate AMP: arginine 156 and arginine 167. Glycine 203 contacts ATP.

Belongs to the adenylate kinase family. As to quaternary structure, monomer.

The protein localises to the cytoplasm. The catalysed reaction is AMP + ATP = 2 ADP. It functions in the pathway purine metabolism; AMP biosynthesis via salvage pathway; AMP from ADP: step 1/1. Functionally, catalyzes the reversible transfer of the terminal phosphate group between ATP and AMP. Plays an important role in cellular energy homeostasis and in adenine nucleotide metabolism. The polypeptide is Adenylate kinase (Cellvibrio japonicus (strain Ueda107) (Pseudomonas fluorescens subsp. cellulosa)).